The following is a 511-amino-acid chain: Protoheme IX farnesyltransferase, mitochondrial (511 aa).

A mitochondrion-targeting transit peptide spans 1–23 (MSSSTESLPGTLRRTLTTSRAPA). 2 disordered regions span residues 1 to 27 (MSSSTESLPGTLRRTLTTSRAPAATSS) and 50 to 136 (HDSA…LAPD). Low complexity-rich tracts occupy residues 52–79 (SASSQRSTTVASTTSTTADAADGSSSTT), 104–115 (RKAAAAAAAAAA), and 126–136 (PDAPTADLAPD). Helical transmembrane passes span 168 to 188 (LTVLVVLSAMVPYALYPVPSF), 197 to 217 (SLAPSLSPLTLLFLTTGTTLC), 253 to 273 (AAVLFAVGCGLAGTLALYFGV), 275 to 295 (PTVSFLGAANIALYAGAYTPL), 303 to 323 (TWVGAIVGGIPPLMGWAAAAG), 344 to 364 (LGGWLFAGLLFAWQFPHFMPL), 398 to 418 (AFIPLCVGLSATGVTEWSFAV), and 444 to 464 (ARGLFWASVWHLPVIMVLALA).

The protein belongs to the UbiA prenyltransferase family.

Its subcellular location is the mitochondrion membrane. In terms of biological role, converts protoheme IX and farnesyl diphosphate to heme O. This is Protoheme IX farnesyltransferase, mitochondrial (pft-1) from Neurospora crassa (strain ATCC 24698 / 74-OR23-1A / CBS 708.71 / DSM 1257 / FGSC 987).